The chain runs to 250 residues: tRNA (guanine-N(1)-)-methyltransferase (250 aa).

Residues Gly-113 and 133–138 each bind S-adenosyl-L-methionine; that span reads VGDYVL.

Belongs to the RNA methyltransferase TrmD family. Homodimer.

Its subcellular location is the cytoplasm. The catalysed reaction is guanosine(37) in tRNA + S-adenosyl-L-methionine = N(1)-methylguanosine(37) in tRNA + S-adenosyl-L-homocysteine + H(+). Functionally, specifically methylates guanosine-37 in various tRNAs. In Proteus mirabilis (strain HI4320), this protein is tRNA (guanine-N(1)-)-methyltransferase.